The following is a 610-amino-acid chain: MATVTASSNFVSRTSLFNNHGASSCSDVAQITLKGQSLTHCGLRSFNMVDNLQRRSQAKPVSAKSSKRSSKVKTAGKIVCEKGMSVIFIGAEVGPWSKTGGLGDVLGGLPPALAARGHRVMTICPRYDQYKDAWDTCVVVQIKVGDKVENVRFFHCYKRGVDRVFVDHPIFLAKVVGKTGSKIYGPITGVDYNDNQLRFSLLCQAALEAPQVLNLNSSKYFSGPYGEDVVFVANDWHTALLPCYLKSMYQSRGVYMNAKVVFCIHNIAYQGRFAFDDYSLLNLPISFKSSFDFMDGYEKPVKGRKINWMKAAILEAHRVLTVSPYYAQELISGVDRGVELHKYLRMKTVSGIINGMDVQEWNPSTDKYIDIKYDITTVTDAKPLIKEALQAAVGLPVDRDVPVIGFIGRLEEQKGSDILVEAISKFMGLNVQMVILGTGKKKMEAQILELEEKFPGKAVGVAKFNVPLAHMITAGADFIIVPSRFEPCGLIQLHAMRYGTVPIVASTGGLVDTVKDGYTGFHIGRFNVKCEVVDPDDVIATAKAVTRAVAVYGTSAMQEMVKNCMDQDFSWKGPARLWEKVLLSLNVAGSEAGTEGEEIAPLAKENVATP.

The N-terminal 79 residues, 1–79, are a transit peptide targeting the chloroplast; it reads MATVTASSNF…SKVKTAGKIV (79 aa). Lys-98 is a binding site for ADP-alpha-D-glucose. Residues 438-454 are a coiled coil; that stretch reads TGKKKMEAQILELEEKF.

The protein belongs to the glycosyltransferase 1 family. Bacterial/plant glycogen synthase subfamily. In terms of assembly, interacts with PTST. This interaction is critical for the localization to starch granules. In terms of tissue distribution, expressed in roots, inflorescences, flowers, fruits and at much higher levels in leaves.

The protein localises to the plastid. Its subcellular location is the chloroplast. The enzyme catalyses an NDP-alpha-D-glucose + [(1-&gt;4)-alpha-D-glucosyl](n) = [(1-&gt;4)-alpha-D-glucosyl](n+1) + a ribonucleoside 5'-diphosphate + H(+). It functions in the pathway glycan biosynthesis; starch biosynthesis. In terms of biological role, required for the synthesis of amylose. Destroyed as it is released from the starch granules during the night. The circadian expression is controlled by CCA1 and LHY transcription factors. This Arabidopsis thaliana (Mouse-ear cress) protein is Granule-bound starch synthase 1, chloroplastic/amyloplastic.